A 136-amino-acid polypeptide reads, in one-letter code: Nucleoside diphosphate kinase (136 aa).

Residues Lys10, Phe58, Arg86, Thr92, Arg104, and Asn114 each contribute to the ATP site. His117 (pros-phosphohistidine intermediate) is an active-site residue.

This sequence belongs to the NDK family. In terms of assembly, homotetramer. Requires Mg(2+) as cofactor.

It is found in the cytoplasm. It catalyses the reaction a 2'-deoxyribonucleoside 5'-diphosphate + ATP = a 2'-deoxyribonucleoside 5'-triphosphate + ADP. It carries out the reaction a ribonucleoside 5'-diphosphate + ATP = a ribonucleoside 5'-triphosphate + ADP. Functionally, major role in the synthesis of nucleoside triphosphates other than ATP. The ATP gamma phosphate is transferred to the NDP beta phosphate via a ping-pong mechanism, using a phosphorylated active-site intermediate. In Saccharopolyspora erythraea (strain ATCC 11635 / DSM 40517 / JCM 4748 / NBRC 13426 / NCIMB 8594 / NRRL 2338), this protein is Nucleoside diphosphate kinase.